Consider the following 41-residue polypeptide: Photosystem I reaction center subunit VIII (41 aa).

Residues 12-32 (WIMIPVTCWLFPVVVMGLLFI) form a helical membrane-spanning segment.

It belongs to the PsaI family.

It localises to the cellular thylakoid membrane. May help in the organization of the PsaL subunit. The sequence is that of Photosystem I reaction center subunit VIII from Cyanothece sp. (strain PCC 7425 / ATCC 29141).